The chain runs to 100 residues: NADH-quinone oxidoreductase subunit K (100 aa).

3 helical membrane passes run 2-22, 29-49, and 63-83; these read IGLS…LMGV, LMLF…FAAI, and FFII…LIVL.

This sequence belongs to the complex I subunit 4L family. In terms of assembly, NDH-1 is composed of 14 different subunits. Subunits NuoA, H, J, K, L, M, N constitute the membrane sector of the complex.

Its subcellular location is the cell inner membrane. It carries out the reaction a quinone + NADH + 5 H(+)(in) = a quinol + NAD(+) + 4 H(+)(out). Functionally, NDH-1 shuttles electrons from NADH, via FMN and iron-sulfur (Fe-S) centers, to quinones in the respiratory chain. The immediate electron acceptor for the enzyme in this species is believed to be ubiquinone. Couples the redox reaction to proton translocation (for every two electrons transferred, four hydrogen ions are translocated across the cytoplasmic membrane), and thus conserves the redox energy in a proton gradient. In Sulfurovum sp. (strain NBC37-1), this protein is NADH-quinone oxidoreductase subunit K.